The following is a 346-amino-acid chain: Fe(3+) ions import ATP-binding protein FbpC 2 (346 aa).

Residues 5-235 (LEVDGVDKSF…PVDVPTAEFI (231 aa)) form the ABC transporter domain. ATP is bound at residue 37–44 (GPSGCGKT).

Belongs to the ABC transporter superfamily. Fe(3+) ion importer (TC 3.A.1.10) family. In terms of assembly, the complex is composed of two ATP-binding proteins (FbpC), two transmembrane proteins (FbpB) and a solute-binding protein (FbpA).

The protein localises to the cell membrane. The enzyme catalyses Fe(3+)(out) + ATP + H2O = Fe(3+)(in) + ADP + phosphate + H(+). Part of the ABC transporter complex FbpABC involved in Fe(3+) ions import. Responsible for energy coupling to the transport system. This Rhodococcus jostii (strain RHA1) protein is Fe(3+) ions import ATP-binding protein FbpC 2.